The following is a 240-amino-acid chain: MLSTAAYRDPDRELVMGPQGSAGPVQMRFSPYAFNGGTVLAIAGEDFSIVASDTRLSEGFSIHTRDSPKCYKLTDKTVIGCSGFHGDCLTLTKIIEARLKMYKHSNNKAMTTGAIAAMLSTILYSRRFFPYYVYNIIEGLDEEGKGAVYSFDPVGSYQRDSFKAGGSASAMLQPLLDNQVGFKNMQNVEHVPLTLDRAMRLVKDVFISAAERDVYTGDALRICIVTKEGIREETVPLRKD.

Met1 is subject to N-acetylmethionine. A propeptide spanning residues 1–27 is cleaved from the precursor; that stretch reads MLSTAAYRDPDRELVMGPQGSAGPVQM. A glycan (O-linked (GlcNAc) serine) is linked at Ser57. Residues Ser61 and Ser67 each carry the phosphoserine modification. Tyr149 carries the post-translational modification Phosphotyrosine. Ser161 is modified (phosphoserine). Lys203 is modified (N6-acetyllysine). Residue Ser208 is glycosylated (O-linked (GlcNAc) serine).

It belongs to the peptidase T1B family. In terms of assembly, the 26S proteasome consists of a 20S proteasome core and two 19S regulatory subunits. The 20S proteasome core is a barrel-shaped complex made of 28 subunits that are arranged in four stacked rings. The two outer rings are each formed by seven alpha subunits, and the two inner rings are formed by seven beta subunits. The proteolytic activity is exerted by three beta-subunits PSMB5, PSMB6 and PSMB7. Interacts with SERPINB2. Interacts with RFPL4A. In terms of tissue distribution, ubiquitous.

It is found in the cytoplasm. Its subcellular location is the nucleus. Non-catalytic component of the 20S core proteasome complex involved in the proteolytic degradation of most intracellular proteins. This complex plays numerous essential roles within the cell by associating with different regulatory particles. Associated with two 19S regulatory particles, forms the 26S proteasome and thus participates in the ATP-dependent degradation of ubiquitinated proteins. The 26S proteasome plays a key role in the maintenance of protein homeostasis by removing misfolded or damaged proteins that could impair cellular functions, and by removing proteins whose functions are no longer required. Associated with the PA200 or PA28, the 20S proteasome mediates ubiquitin-independent protein degradation. This type of proteolysis is required in several pathways including spermatogenesis (20S-PA200 complex) or generation of a subset of MHC class I-presented antigenic peptides (20S-PA28 complex). This is Proteasome subunit beta type-1 (Psmb1) from Rattus norvegicus (Rat).